We begin with the raw amino-acid sequence, 122 residues long: MARIAGVNIPTGKRVPIALTYIHGIGSKFADEIVSAVGIEPTRRVNELSDAEVLQIREYIDANLTVEGDLRRETQMNIKRLMDLGSYRGLRHRRGLPVRGQRTHTNARTRKGPAKPIAGKKK.

Residues 92–122 are disordered; sequence HRRGLPVRGQRTHTNARTRKGPAKPIAGKKK.

Belongs to the universal ribosomal protein uS13 family. Part of the 30S ribosomal subunit. Forms a loose heterodimer with protein S19. Forms two bridges to the 50S subunit in the 70S ribosome.

Functionally, located at the top of the head of the 30S subunit, it contacts several helices of the 16S rRNA. In the 70S ribosome it contacts the 23S rRNA (bridge B1a) and protein L5 of the 50S subunit (bridge B1b), connecting the 2 subunits; these bridges are implicated in subunit movement. Contacts the tRNAs in the A and P-sites. The sequence is that of Small ribosomal subunit protein uS13 from Paracoccus denitrificans (strain Pd 1222).